We begin with the raw amino-acid sequence, 416 residues long: Gamma-glutamyl phosphate reductase (416 aa).

The protein belongs to the gamma-glutamyl phosphate reductase family.

It is found in the cytoplasm. The catalysed reaction is L-glutamate 5-semialdehyde + phosphate + NADP(+) = L-glutamyl 5-phosphate + NADPH + H(+). Its pathway is amino-acid biosynthesis; L-proline biosynthesis; L-glutamate 5-semialdehyde from L-glutamate: step 2/2. Functionally, catalyzes the NADPH-dependent reduction of L-glutamate 5-phosphate into L-glutamate 5-semialdehyde and phosphate. The product spontaneously undergoes cyclization to form 1-pyrroline-5-carboxylate. This is Gamma-glutamyl phosphate reductase from Streptococcus pyogenes serotype M6 (strain ATCC BAA-946 / MGAS10394).